The primary structure comprises 385 residues: Putative UDP-N-acetylglucosamine 2-epimerase (385 aa).

It belongs to the UDP-N-acetylglucosamine 2-epimerase family.

The protein resides in the cytoplasm. It catalyses the reaction UDP-N-acetyl-alpha-D-glucosamine = UDP-N-acetyl-alpha-D-mannosamine. The polypeptide is Putative UDP-N-acetylglucosamine 2-epimerase (Clostridium acetobutylicum (strain ATCC 824 / DSM 792 / JCM 1419 / IAM 19013 / LMG 5710 / NBRC 13948 / NRRL B-527 / VKM B-1787 / 2291 / W)).